Here is a 445-residue protein sequence, read N- to C-terminus: Tubulin alpha-3 chain (445 aa).

GTP contacts are provided by glutamine 11, glutamate 72, serine 141, glycine 145, threonine 146, threonine 180, asparagine 207, and asparagine 229. Glutamate 72 is a binding site for Mg(2+). Residue glutamate 255 is part of the active site.

Belongs to the tubulin family. Dimer of alpha and beta chains. A typical microtubule is a hollow water-filled tube with an outer diameter of 25 nm and an inner diameter of 15 nM. Alpha-beta heterodimers associate head-to-tail to form protofilaments running lengthwise along the microtubule wall with the beta-tubulin subunit facing the microtubule plus end conferring a structural polarity. Microtubules usually have 13 protofilaments but different protofilament numbers can be found in some organisms and specialized cells. Interacts with NUM1. The cofactor is Mg(2+).

The protein resides in the cytoplasm. It localises to the cytoskeleton. The catalysed reaction is GTP + H2O = GDP + phosphate + H(+). Its function is as follows. Tubulin is the major constituent of microtubules, a cylinder consisting of laterally associated linear protofilaments composed of alpha- and beta-tubulin heterodimers. Microtubules grow by the addition of GTP-tubulin dimers to the microtubule end, where a stabilizing cap forms. Below the cap, tubulin dimers are in GDP-bound state, owing to GTPase activity of alpha-tubulin. This chain is Tubulin alpha-3 chain (TUB3), found in Saccharomyces cerevisiae (strain ATCC 204508 / S288c) (Baker's yeast).